The following is a 342-amino-acid chain: MGVTVAVAGASGYGGGELLRLLLAHPEIKIGALAANASAGLPVTEVHPHLPDLEGRVFTDAAALAGTDADIVFLALPHGQSAAVAATLPDTVRVADLGADHRLVDPEAWRRAYGGEHAGTWTYGLPELPWARAEIAASRRVAIPGCYPTATSLGLVPLLVGGLVEPADLVVVAASGTSGAGRSATVNLLGSEVMGDLTAYKVGTHQHRPEITQTLSRAAGMTVTVSFTPVLAPLPRGILATSTGRATPGTDADAVYETLRAAYAGEPFVRVLPPGRWPHTAATLGGNAVHVQGTFDPETGRAIVVTAIDNLGKGAAGQALQCANLMLGLPETAGLTAQGIAP.

Residue C146 is part of the active site.

It belongs to the NAGSA dehydrogenase family. Type 1 subfamily.

The protein resides in the cytoplasm. It catalyses the reaction N-acetyl-L-glutamate 5-semialdehyde + phosphate + NADP(+) = N-acetyl-L-glutamyl 5-phosphate + NADPH + H(+). The protein operates within amino-acid biosynthesis; L-arginine biosynthesis; N(2)-acetyl-L-ornithine from L-glutamate: step 3/4. Functionally, catalyzes the NADPH-dependent reduction of N-acetyl-5-glutamyl phosphate to yield N-acetyl-L-glutamate 5-semialdehyde. In Frankia casuarinae (strain DSM 45818 / CECT 9043 / HFP020203 / CcI3), this protein is N-acetyl-gamma-glutamyl-phosphate reductase.